Consider the following 693-residue polypeptide: Putative transmembrane protein ORF68 (693 aa).

An N-terminal signal peptide occupies residues 1–17; that stretch reads MILTIILYTLLFSTCSA. Over 18–666 the chain is Extracellular; the sequence is QSVHTMPEAV…WLTKFGTGGG (649 aa). Residues 208-256 adopt a coiled-coil conformation; it reads SKAANNRMDALEDGMKNINTRVTETNLLLEKLSTEVTGALTQLENEIKM. A helical membrane pass occupies residues 667–687; it reads IAGVTIGLLLPILAIVFSCYV. The Cytoplasmic portion of the chain corresponds to 688–693; that stretch reads FCKRRV.

Its subcellular location is the host membrane. This is Putative transmembrane protein ORF68 from Magallana gigas (Pacific oyster).